The sequence spans 490 residues: Membrane-bound lytic murein transglycosylase F (490 aa).

Residues 1 to 32 form the signal peptide; it reads MFALTAYRLRCAAWLLATGIFLLLAGCSEAKA. The non-LT domain stretch occupies residues 33-269; the sequence is PTALERVQKE…RLKDRYYGHV (237 aa). The interval 270 to 490 is LT domain; that stretch reads DVLGYVGAYT…PDDDEGDGKL (221 aa). Glutamate 316 is an active-site residue. Residues 467 to 490 form a disordered region; sequence AESGLHLPGVNKTRPDDDEGDGKL.

In the N-terminal section; belongs to the bacterial solute-binding protein 3 family. The protein in the C-terminal section; belongs to the transglycosylase Slt family.

The protein resides in the cell outer membrane. It catalyses the reaction Exolytic cleavage of the (1-&gt;4)-beta-glycosidic linkage between N-acetylmuramic acid (MurNAc) and N-acetylglucosamine (GlcNAc) residues in peptidoglycan, from either the reducing or the non-reducing ends of the peptidoglycan chains, with concomitant formation of a 1,6-anhydrobond in the MurNAc residue.. Its function is as follows. Murein-degrading enzyme that degrades murein glycan strands and insoluble, high-molecular weight murein sacculi, with the concomitant formation of a 1,6-anhydromuramoyl product. Lytic transglycosylases (LTs) play an integral role in the metabolism of the peptidoglycan (PG) sacculus. Their lytic action creates space within the PG sacculus to allow for its expansion as well as for the insertion of various structures such as secretion systems and flagella. The protein is Membrane-bound lytic murein transglycosylase F of Pseudomonas paraeruginosa (strain DSM 24068 / PA7) (Pseudomonas aeruginosa (strain PA7)).